Reading from the N-terminus, the 151-residue chain is Nucleoside diphosphate kinase (151 aa).

ATP-binding residues include Lys-9, Phe-57, Arg-85, Thr-91, Arg-102, and Asn-112. The active-site Pros-phosphohistidine intermediate is His-115.

The protein belongs to the NDK family. The cofactor is Mg(2+).

It localises to the cytoplasm. It carries out the reaction a 2'-deoxyribonucleoside 5'-diphosphate + ATP = a 2'-deoxyribonucleoside 5'-triphosphate + ADP. It catalyses the reaction a ribonucleoside 5'-diphosphate + ATP = a ribonucleoside 5'-triphosphate + ADP. Functionally, major role in the synthesis of nucleoside triphosphates other than ATP. The ATP gamma phosphate is transferred to the NDP beta phosphate via a ping-pong mechanism, using a phosphorylated active-site intermediate. This is Nucleoside diphosphate kinase from Archaeoglobus fulgidus (strain ATCC 49558 / DSM 4304 / JCM 9628 / NBRC 100126 / VC-16).